Here is a 400-residue protein sequence, read N- to C-terminus: CCA-adding enzyme (400 aa).

ATP contacts are provided by Gly28 and Arg31. 2 residues coordinate CTP: Gly28 and Arg31. Positions 41 and 43 each coordinate Mg(2+). ATP contacts are provided by Arg112, Asp155, Arg158, Arg161, and Arg164. CTP is bound by residues Arg112, Asp155, Arg158, Arg161, and Arg164.

This sequence belongs to the tRNA nucleotidyltransferase/poly(A) polymerase family. Bacterial CCA-adding enzyme type 3 subfamily. As to quaternary structure, homodimer. It depends on Mg(2+) as a cofactor.

The enzyme catalyses a tRNA precursor + 2 CTP + ATP = a tRNA with a 3' CCA end + 3 diphosphate. It catalyses the reaction a tRNA with a 3' CCA end + 2 CTP + ATP = a tRNA with a 3' CCACCA end + 3 diphosphate. Its function is as follows. Catalyzes the addition and repair of the essential 3'-terminal CCA sequence in tRNAs without using a nucleic acid template. Adds these three nucleotides in the order of C, C, and A to the tRNA nucleotide-73, using CTP and ATP as substrates and producing inorganic pyrophosphate. tRNA 3'-terminal CCA addition is required both for tRNA processing and repair. Also involved in tRNA surveillance by mediating tandem CCA addition to generate a CCACCA at the 3' terminus of unstable tRNAs. While stable tRNAs receive only 3'-terminal CCA, unstable tRNAs are marked with CCACCA and rapidly degraded. In Staphylococcus aureus (strain Mu3 / ATCC 700698), this protein is CCA-adding enzyme.